A 361-amino-acid chain; its full sequence is 5-exo-hydroxycamphor dehydrogenase (361 aa).

Zn(2+) is bound by residues cysteine 40, histidine 62, cysteine 98, cysteine 101, cysteine 104, and cysteine 170.

The protein belongs to the zinc-containing alcohol dehydrogenase family. The cofactor is Zn(2+).

The catalysed reaction is (1R,4R,5R)-5-hydroxycamphor + NAD(+) = (1R,4R)-bornane-2,5-dione + NADH + H(+). It participates in terpene metabolism; (R)-camphor degradation. This is 5-exo-hydroxycamphor dehydrogenase (camD) from Pseudomonas putida (Arthrobacter siderocapsulatus).